We begin with the raw amino-acid sequence, 337 residues long: Ornithine carbamoyltransferase, catabolic (337 aa).

Residues 57-60, Gln84, Arg108, and 135-138 contribute to the carbamoyl phosphate site; these read STRT and HPTQ. Residues Asn167, Asp231, and 235 to 236 each bind L-ornithine; that span reads SM. Carbamoyl phosphate contacts are provided by residues 272 to 273 and Arg317; that span reads CL.

This sequence belongs to the aspartate/ornithine carbamoyltransferase superfamily. OTCase family.

Its subcellular location is the cytoplasm. The catalysed reaction is carbamoyl phosphate + L-ornithine = L-citrulline + phosphate + H(+). It participates in amino-acid degradation; L-arginine degradation via ADI pathway; carbamoyl phosphate from L-arginine: step 2/2. Its function is as follows. Reversibly catalyzes the transfer of the carbamoyl group from carbamoyl phosphate (CP) to the N(epsilon) atom of ornithine (ORN) to produce L-citrulline. The polypeptide is Ornithine carbamoyltransferase, catabolic (Streptococcus ratti).